A 341-amino-acid chain; its full sequence is tRNA N6-adenosine threonylcarbamoyltransferase (341 aa).

Fe cation contacts are provided by His111 and His115. Substrate-binding positions include 134–138 (LVSGG), Asp167, Gly180, and Asn276. Fe cation is bound at residue Asp304.

This sequence belongs to the KAE1 / TsaD family. The cofactor is Fe(2+).

Its subcellular location is the cytoplasm. It carries out the reaction L-threonylcarbamoyladenylate + adenosine(37) in tRNA = N(6)-L-threonylcarbamoyladenosine(37) in tRNA + AMP + H(+). Functionally, required for the formation of a threonylcarbamoyl group on adenosine at position 37 (t(6)A37) in tRNAs that read codons beginning with adenine. Is involved in the transfer of the threonylcarbamoyl moiety of threonylcarbamoyl-AMP (TC-AMP) to the N6 group of A37, together with TsaE and TsaB. TsaD likely plays a direct catalytic role in this reaction. This is tRNA N6-adenosine threonylcarbamoyltransferase from Pseudomonas fluorescens (strain Pf0-1).